A 264-amino-acid chain; its full sequence is MDKLVIAGKAYSSRLLVGTGKYRDFDETRTAVDASGAEIITVAIRRTNLGQNPEEPSLLDVLPPSEYTLLPNTAGCYTVEDAVRTLRLARELLDGHTLVKLEVLGDPKTLYPNIVETLKAAEILIKEGFQVMVYTSDDPIAARQLEEIGCVAIMPLASLIGSGMGILNPWNLQIIIENAKVPVIVDAGVGTASDAAIAMELGCDGVLMNTAIAAAQNPVLMASAMKKAVEAGREAYLAGRMPKKLYSASPSSPVEGVIGNMSGK.

Lys-100 (schiff-base intermediate with DXP) is an active-site residue. 1-deoxy-D-xylulose 5-phosphate contacts are provided by residues Gly-161, Ala-187–Gly-188, and Asn-209–Thr-210.

Belongs to the ThiG family. As to quaternary structure, homotetramer. Forms heterodimers with either ThiH or ThiS.

The protein localises to the cytoplasm. It carries out the reaction [ThiS sulfur-carrier protein]-C-terminal-Gly-aminoethanethioate + 2-iminoacetate + 1-deoxy-D-xylulose 5-phosphate = [ThiS sulfur-carrier protein]-C-terminal Gly-Gly + 2-[(2R,5Z)-2-carboxy-4-methylthiazol-5(2H)-ylidene]ethyl phosphate + 2 H2O + H(+). Its pathway is cofactor biosynthesis; thiamine diphosphate biosynthesis. In terms of biological role, catalyzes the rearrangement of 1-deoxy-D-xylulose 5-phosphate (DXP) to produce the thiazole phosphate moiety of thiamine. Sulfur is provided by the thiocarboxylate moiety of the carrier protein ThiS. In vitro, sulfur can be provided by H(2)S. The polypeptide is Thiazole synthase (Nitrosospira multiformis (strain ATCC 25196 / NCIMB 11849 / C 71)).